The following is a 157-amino-acid chain: CASP-like protein 1 (157 aa).

At 1–13 (MKTEARDGGSEWR) the chain is on the cytoplasmic side. The helical transmembrane segment at 14-34 (WVAIFELFLRLAAIVSTSVAV) threads the bilayer. At 35–40 (YAAMGK) the chain is on the extracellular side. A helical membrane pass occupies residues 41 to 61 (IFVVAVNGVACFYLLMSLPVS). Residues 62-82 (IFNIMRPHAYPANRVFLNIMD) are Cytoplasmic-facing. The chain crosses the membrane as a helical span at residues 83–103 (MVMVALVTAGALAAGIVYLVE). The Extracellular segment spans residues 104–121 (KAGNARASWVSVWSQFDS). A helical transmembrane segment spans residues 122-142 (SSCFAVLALILHVLLSGVILY). Topologically, residues 143-157 (KQALNIKFKKLDSVD) are cytoplasmic.

Belongs to the Casparian strip membrane proteins (CASP) family. Homodimer and heterodimers.

It localises to the cell membrane. The polypeptide is CASP-like protein 1 (Picea sitchensis (Sitka spruce)).